Consider the following 371-residue polypeptide: Flagellar P-ring protein (371 aa).

The first 25 residues, 1–25 (MKMRACKWLLTLAVAFAATLSSAYA), serve as a signal peptide directing secretion.

This sequence belongs to the FlgI family. As to quaternary structure, the basal body constitutes a major portion of the flagellar organelle and consists of four rings (L,P,S, and M) mounted on a central rod.

It is found in the periplasm. The protein resides in the bacterial flagellum basal body. In terms of biological role, assembles around the rod to form the L-ring and probably protects the motor/basal body from shearing forces during rotation. This Sinorhizobium medicae (strain WSM419) (Ensifer medicae) protein is Flagellar P-ring protein.